The following is a 971-amino-acid chain: uncharacterized protein (971 aa).

Transmembrane regions (helical) follow at residues 11-31 (WLLK…GIIF), 516-536 (FASS…ALGI), 547-567 (LALA…GGVV), 569-589 (VFSF…LITL), 615-635 (FFTM…VIYL), 651-671 (AITS…LFVS), 727-747 (LLFI…LYLG), 763-783 (STGI…YSLP), 795-815 (IALI…NFIF), 817-837 (IDQS…FFQA), 878-898 (IGSS…FGGI), 900-920 (GTIN…SVFV), and 923-943 (LPLF…YVQI).

It is found in the cell membrane. This is an uncharacterized protein from Mycoplasma pneumoniae (strain ATCC 29342 / M129 / Subtype 1) (Mycoplasmoides pneumoniae).